The primary structure comprises 544 residues: Hydroxylamine reductase (544 aa).

4 residues coordinate [4Fe-4S] cluster: Cys3, Cys6, Cys15, and Cys21. Residues His244, Glu268, Cys313, Cys400, Cys428, Cys453, Glu487, and Lys489 each contribute to the hybrid [4Fe-2O-2S] cluster site. The residue at position 400 (Cys400) is a Cysteine persulfide.

Belongs to the HCP family. The cofactor is [4Fe-4S] cluster. Hybrid [4Fe-2O-2S] cluster serves as cofactor.

The protein resides in the cytoplasm. It catalyses the reaction A + NH4(+) + H2O = hydroxylamine + AH2 + H(+). Functionally, catalyzes the reduction of hydroxylamine to form NH(3) and H(2)O. The polypeptide is Hydroxylamine reductase (Trichormus variabilis (strain ATCC 29413 / PCC 7937) (Anabaena variabilis)).